Consider the following 98-residue polypeptide: MTQASTNILLAFFFSLLGTLIFRSHLMSTLLCLEGMMLTLFIMSTMTALNSQSTVMYTIPIVMLVFAACEAAIGLALLAMISNTYGTDYVQNLNLLQC.

3 helical membrane passes run 2–22, 29–49, and 61–81; these read TQASTNILLAFFFSLLGTLIF, TLLCLEGMMLTLFIMSTMTAL, and IVMLVFAACEAAIGLALLAMI.

It belongs to the complex I subunit 4L family. As to quaternary structure, core subunit of respiratory chain NADH dehydrogenase (Complex I) which is composed of 45 different subunits.

It localises to the mitochondrion inner membrane. It carries out the reaction a ubiquinone + NADH + 5 H(+)(in) = a ubiquinol + NAD(+) + 4 H(+)(out). In terms of biological role, core subunit of the mitochondrial membrane respiratory chain NADH dehydrogenase (Complex I) which catalyzes electron transfer from NADH through the respiratory chain, using ubiquinone as an electron acceptor. Part of the enzyme membrane arm which is embedded in the lipid bilayer and involved in proton translocation. This is NADH-ubiquinone oxidoreductase chain 4L (MT-ND4L) from Calomys musculinus (Drylands vesper mouse).